The following is a 180-amino-acid chain: ATP-dependent protease subunit HslV (180 aa).

The active site involves Thr-7. Na(+) contacts are provided by Ala-164, Cys-167, and Thr-170.

The protein belongs to the peptidase T1B family. HslV subfamily. In terms of assembly, a double ring-shaped homohexamer of HslV is capped on each side by a ring-shaped HslU homohexamer. The assembly of the HslU/HslV complex is dependent on binding of ATP.

The protein resides in the cytoplasm. The catalysed reaction is ATP-dependent cleavage of peptide bonds with broad specificity.. Allosterically activated by HslU binding. Functionally, protease subunit of a proteasome-like degradation complex believed to be a general protein degrading machinery. The chain is ATP-dependent protease subunit HslV from Brevibacillus brevis (strain 47 / JCM 6285 / NBRC 100599).